A 172-amino-acid chain; its full sequence is 3-hydroxydecanoyl-[acyl-carrier-protein] dehydratase (172 aa).

The active site involves histidine 71.

It belongs to the thioester dehydratase family. FabA subfamily. In terms of assembly, homodimer.

Its subcellular location is the cytoplasm. The enzyme catalyses a (3R)-hydroxyacyl-[ACP] = a (2E)-enoyl-[ACP] + H2O. The catalysed reaction is (3R)-hydroxydecanoyl-[ACP] = (2E)-decenoyl-[ACP] + H2O. It catalyses the reaction (2E)-decenoyl-[ACP] = (3Z)-decenoyl-[ACP]. It functions in the pathway lipid metabolism; fatty acid biosynthesis. Necessary for the introduction of cis unsaturation into fatty acids. Catalyzes the dehydration of (3R)-3-hydroxydecanoyl-ACP to E-(2)-decenoyl-ACP and then its isomerization to Z-(3)-decenoyl-ACP. Can catalyze the dehydratase reaction for beta-hydroxyacyl-ACPs with saturated chain lengths up to 16:0, being most active on intermediate chain length. The chain is 3-hydroxydecanoyl-[acyl-carrier-protein] dehydratase from Brucella anthropi (strain ATCC 49188 / DSM 6882 / CCUG 24695 / JCM 21032 / LMG 3331 / NBRC 15819 / NCTC 12168 / Alc 37) (Ochrobactrum anthropi).